Reading from the N-terminus, the 131-residue chain is Chorion class high-cysteine HCB protein 12 (131 aa).

The signal sequence occupies residues 1 to 21; sequence MAAKLIVFVCAIALVAQSVLG. A left arm region spans residues 22–46; sequence TGCGCCCRGCGCGCGGCGCGCCENF. Residues 47–110 form a central domain region; sequence RVCSNSAAPT…GNGCVGITRS (64 aa). Residues 111–131 form a right arm (Gly-rich tandem repeats) region; that stretch reads CGGCGCGCGGCGCGCGGCGCC.

Belongs to the chorion protein family.

This protein is one of many from the eggshell of the silk moth. In Bombyx mori (Silk moth), this protein is Chorion class high-cysteine HCB protein 12.